Consider the following 387-residue polypeptide: Phosphoglycerate kinase (387 aa).

Substrate contacts are provided by residues 21–23, Arg-36, and 59–62; these read DLN and HLGR. An N6-acetyllysine modification is found at Lys-84. Arg-113 and Arg-146 together coordinate substrate. ATP-binding positions include Lys-197, Glu-314, and 340–343; that span reads GGDT.

This sequence belongs to the phosphoglycerate kinase family. Monomer.

It is found in the cytoplasm. It carries out the reaction (2R)-3-phosphoglycerate + ATP = (2R)-3-phospho-glyceroyl phosphate + ADP. It participates in carbohydrate degradation; glycolysis; pyruvate from D-glyceraldehyde 3-phosphate: step 2/5. The polypeptide is Phosphoglycerate kinase (pgk) (Escherichia coli O157:H7).